Here is a 96-residue protein sequence, read N- to C-terminus: Small ribosomal subunit protein bS6c (96 aa).

Belongs to the bacterial ribosomal protein bS6 family.

The protein localises to the plastid. Its subcellular location is the chloroplast. In terms of biological role, binds together with bS18 to 16S ribosomal RNA. The protein is Small ribosomal subunit protein bS6c (rps6) of Guillardia theta (Cryptophyte).